We begin with the raw amino-acid sequence, 1403 residues long: Eukaryotic translation initiation factor 4 gamma (1403 aa).

3 stretches are compositionally biased toward polar residues: residues 1 to 11 (MSSKPPSNTPK), 19 to 39 (ASSQSNKSNSTKASENNTATA), and 50 to 60 (EPTNTSRANAQ). 4 disordered regions span residues 1 to 381 (MSSK…GSTP), 439 to 464 (SRSGSQVSDQVVESPNSSTLSPRNGF), 488 to 774 (VVVP…KRDL), and 861 to 1003 (AFSD…EALL). The residue at position 83 (serine 83) is a Phosphoserine. Residues 109–137 (DNTSKPSANSSAERTSSQHQKPETSSQIG) are compositionally biased toward polar residues. 2 stretches are compositionally biased toward low complexity: residues 190-208 (SGVSSYSSKSQSVNSSVTS) and 231-248 (PRPTTSASNTNTSPANGA). The segment covering 249–269 (PTNKPSTDINTTDPATQTTQV) has biased composition (polar residues). Low complexity predominate over residues 270-291 (SASNSPALSGSSTPSNTSSRSN). The span at 298–308 (FSEKRHYDRYG) shows a compositional bias: basic and acidic residues. Low complexity predominate over residues 325–334 (NYNNSGNNRN). 3 stretches are compositionally biased toward polar residues: residues 346–381 (RNYNNQGAYPTYMSNGRSANQSPRNNPQNVNNGSTP), 439–460 (SRSGSQVSDQVVESPNSSTLSP), and 493–508 (KNASSPNPSETNSRAE). 4 positions are modified to phosphoserine: serine 452, serine 455, serine 456, and serine 459. The span at 537-714 (IQEKAEAEAK…GKREADKNPE (178 aa)) shows a compositional bias: basic and acidic residues. The span at 720–737 (PLASSEANVDTSKQTNAT) shows a compositional bias: polar residues. A compositionally biased stretch (basic and acidic residues) spans 741–754 (VVDKTKVEKLKASE). The span at 757–768 (STSSLSSPSHST) shows a compositional bias: low complexity. Residues serine 866 and serine 882 each carry the phosphoserine modification. Residues 868–886 (RGMYSSSRQSSRSGSNTHS) show a composition bias toward low complexity. Phosphothreonine is present on threonine 884. 4 positions are modified to phosphoserine: serine 886, serine 911, serine 919, and serine 921. Residue tyrosine 923 is modified to Phosphotyrosine. Basic and acidic residues predominate over residues 986 to 995 (KLTEKPAETK). Residues 1009–1245 (QRKVKGSLNK…MDVMDSRKNG (237 aa)) enclose the MIF4G domain. The tract at residues 1266–1403 (AERKKALAES…QKDSNSKTSS (138 aa)) is disordered. Basic and acidic residues predominate over residues 1284 to 1295 (HGRDMNRGDSRM). Composition is skewed to polar residues over residues 1302-1313 (PPFSSSDWSNNK), 1328-1341 (SGTQGSHGPTSLSS), and 1348-1358 (VSRTPSRQNSA). Serine 1333 bears the Phosphoserine mark. The span at 1383–1403 (LEEHDHDNDGGQKDSNSKTSS) shows a compositional bias: basic and acidic residues.

It belongs to the eukaryotic initiation factor 4G family.

Its subcellular location is the cytoplasm. The protein localises to the perinuclear region. Component of the protein complex eIF4F, which is involved in the recognition of the mRNA cap, ATP-dependent unwinding of 5'-terminal secondary structure and recruitment of mRNA to the ribosome. The polypeptide is Eukaryotic translation initiation factor 4 gamma (tif471) (Schizosaccharomyces pombe (strain 972 / ATCC 24843) (Fission yeast)).